Consider the following 116-residue polypeptide: U16-barytoxin-Tl1f (116 aa).

Positions 1–20 (MKTIIVFLSLLVLATKFGDA) are cleaved as a signal peptide. The propeptide occupies 21-74 (NEGVNQEQMKEVIQNEFREDFLNEMAPMSLLQQLEAIESTLLEKEADRNSRQKR). 3 cysteine pairs are disulfide-bonded: C75/C90, C82/C95, and C89/C110. A glycan (N-linked (GlcNAc...) asparagine) is linked at N85.

The protein belongs to the neurotoxin 14 (magi-1) family. 06 (ICK-Trit) subfamily. Expressed by the venom gland.

Its subcellular location is the secreted. In terms of biological role, ion channel inhibitor. The chain is U16-barytoxin-Tl1f from Trittame loki (Brush-footed trapdoor spider).